We begin with the raw amino-acid sequence, 352 residues long: Selenide, water dikinase (352 aa).

Residue Cys-23 is part of the active site. ATP contacts are provided by residues Lys-26 and 54 to 56 (SRD). Asp-57 is a Mg(2+) binding site. Residues Asp-74, Asp-97, and 145-147 (GHS) each bind ATP. Asp-97 lines the Mg(2+) pocket. Residue Asp-233 participates in Mg(2+) binding.

The protein belongs to the selenophosphate synthase 1 family. Class I subfamily. Homodimer. Mg(2+) is required as a cofactor.

The catalysed reaction is hydrogenselenide + ATP + H2O = selenophosphate + AMP + phosphate + 2 H(+). In terms of biological role, synthesizes selenophosphate from selenide and ATP. This chain is Selenide, water dikinase, found in Shewanella sp. (strain MR-7).